The primary structure comprises 397 residues: Meiotic driver wtf28 (397 aa).

Disordered stretches follow at residues 1–41 and 65–102; these read MKNK…GNTL and NWNK…SGTA. Residues 11–29 show a composition bias toward basic and acidic residues; sequence SMDELSTKNDNEIDLEKGP. 9 consecutive transmembrane segments (helical) span residues 108-128, 145-165, 175-195, 205-225, 230-250, 266-286, 290-310, 320-340, and 357-377; these read FLIK…PAVC, WVYF…LWCF, VTVI…AQCV, CIKV…VGLY, DLVV…FGCV, SSIS…IWTL, LFGL…TKGL, ATGY…LFFY, and NGIA…ANAI.

The protein belongs to the WTF family. As to quaternary structure, homomer. Forms protein aggregates. The two isoforms can interact with each other and with themselves. High sequence similarity is required for their interaction.

It is found in the spore membrane. The protein resides in the vacuole membrane. Its subcellular location is the ascus epiplasm. It localises to the cytoplasm. The protein localises to the endoplasmic reticulum membrane. Functionally, promotes unequal transmission of alleles from the parental zygote to progeny spores by acting as poison/antidote system where the poison and antidote proteins are produced from the same locus; the poison component is trans-acting and targets all spores within an ascus whereas the antidote component is spore-specific, leading to poisoning of all progeny that do not inherit the allele. Its function is as follows. Localizes isoform 2 to the vacuole thereby facilitating its degradation. Forms toxic aggregates that disrupt spore maturation. This is Meiotic driver wtf28 from Schizosaccharomyces kambucha (Fission yeast).